Consider the following 631-residue polypeptide: RNA polymerase sigma factor RpoD (631 aa).

Residues 395–465 form a sigma-70 factor domain-2 region; that stretch reads LIKANLRLVV…TRSISDQART (71 aa). The short motif at 419–422 is the Interaction with polymerase core subunit RpoC element; the sequence is DLVQ. Positions 474–550 are sigma-70 factor domain-3; that stretch reads EQINRLNRET…DKAIKNPANH (77 aa). The sigma-70 factor domain-4 stretch occupies residues 563 to 616; that stretch reads ILGTLPEREQEVVKMRFGLEDGYSLTLEEVGLHFNVTRERIRQIESKALRRLKN. Residues 589-608 constitute a DNA-binding region (H-T-H motif); it reads LEEVGLHFNVTRERIRQIES.

This sequence belongs to the sigma-70 factor family. RpoD/SigA subfamily. As to quaternary structure, interacts transiently with the RNA polymerase catalytic core.

It localises to the cytoplasm. Sigma factors are initiation factors that promote the attachment of RNA polymerase to specific initiation sites and are then released. This sigma factor is the primary sigma factor during exponential growth. The protein is RNA polymerase sigma factor RpoD of Borreliella burgdorferi (strain ATCC 35210 / DSM 4680 / CIP 102532 / B31) (Borrelia burgdorferi).